Consider the following 660-residue polypeptide: Galactocerebrosidase (660 aa).

The first 18 residues, 1–18 (MQTHNFLCIISVILGCSA), serve as a signal peptide directing secretion. Substrate is bound by residues Thr-87 and Trp-129. The N-linked (GlcNAc...) asparagine glycan is linked to Asn-147. Asn-175 contributes to the substrate binding site. Residue Glu-176 is the Proton donor/acceptor of the active site. Glu-251 functions as the Nucleophile in the catalytic mechanism. A disulfide bridge connects residues Cys-264 and Cys-371. Residues Asn-293 and Asn-356 are each glycosylated (N-linked (GlcNAc...) asparagine). Arg-373 contributes to the substrate binding site. 6 N-linked (GlcNAc...) asparagine glycosylation sites follow: Asn-413, Asn-465, Asn-495, Asn-499, Asn-537, and Asn-578.

The protein belongs to the glycosyl hydrolase 59 family.

The protein resides in the lysosome. It carries out the reaction a beta-D-galactosyl-(1&lt;-&gt;1')-N-acylsphing-4-enine + H2O = an N-acylsphing-4-enine + D-galactose. The enzyme catalyses beta-D-galactosyl-(1&lt;-&gt;1)-sphing-4-enine + H2O = sphing-4-enine + D-galactose. The catalysed reaction is a D-galactosylceramide + H2O = an N-acyl-sphingoid base + D-galactose. Its function is as follows. Hydrolyzes the galactose ester bonds of glycolipids such as galactosylceramide and galactosylsphingosine. This is Galactocerebrosidase from Danio rerio (Zebrafish).